A 66-amino-acid chain; its full sequence is Large ribosomal subunit protein bL31 (66 aa).

Cysteine 16, cysteine 18, cysteine 36, and cysteine 39 together coordinate Zn(2+).

This sequence belongs to the bacterial ribosomal protein bL31 family. Type A subfamily. In terms of assembly, part of the 50S ribosomal subunit. Zn(2+) serves as cofactor.

Its function is as follows. Binds the 23S rRNA. The sequence is that of Large ribosomal subunit protein bL31 from Geobacter metallireducens (strain ATCC 53774 / DSM 7210 / GS-15).